A 399-amino-acid polypeptide reads, in one-letter code: Acetate kinase (399 aa).

Asn10 provides a ligand contact to Mg(2+). Lys17 lines the ATP pocket. Arg91 is a binding site for substrate. Asp150 serves as the catalytic Proton donor/acceptor. Residues 210–214 (HLGNG), 285–287 (DFR), and 333–337 (GIGEN) contribute to the ATP site. Glu387 serves as a coordination point for Mg(2+).

The protein belongs to the acetokinase family. Homodimer. Mg(2+) is required as a cofactor. The cofactor is Mn(2+).

The protein localises to the cytoplasm. The catalysed reaction is acetate + ATP = acetyl phosphate + ADP. It participates in metabolic intermediate biosynthesis; acetyl-CoA biosynthesis; acetyl-CoA from acetate: step 1/2. Its function is as follows. Catalyzes the formation of acetyl phosphate from acetate and ATP. Can also catalyze the reverse reaction. This is Acetate kinase from Wigglesworthia glossinidia brevipalpis.